The following is a 58-amino-acid chain: Large ribosomal subunit protein bL32 (58 aa).

This sequence belongs to the bacterial ribosomal protein bL32 family.

In Sulfurihydrogenibium sp. (strain YO3AOP1), this protein is Large ribosomal subunit protein bL32.